The primary structure comprises 346 residues: Probable 3-hydroxyacyl-CoA dehydrogenase (346 aa).

Residues 322–346 (RANLSPSATPCTPWKARKATSCAPP) are disordered.

This sequence belongs to the 3-hydroxyacyl-CoA dehydrogenase family.

The catalysed reaction is a (3S)-3-hydroxyacyl-CoA + NAD(+) = a 3-oxoacyl-CoA + NADH + H(+). The chain is Probable 3-hydroxyacyl-CoA dehydrogenase from Deinococcus radiodurans (strain ATCC 13939 / DSM 20539 / JCM 16871 / CCUG 27074 / LMG 4051 / NBRC 15346 / NCIMB 9279 / VKM B-1422 / R1).